Here is a 662-residue protein sequence, read N- to C-terminus: Glutathione hydrolase 7 (662 aa).

At Met1–Gly106 the chain is on the cytoplasmic side. Phosphoserine is present on residues Ser17, Ser72, Ser79, and Ser83. Residues Ser26–Lys90 are disordered. A compositionally biased stretch (low complexity) spans Ser72–Ser83. Residues Leu107–Met127 traverse the membrane as a helical; Signal-anchor for type II membrane protein segment. Over Gln128 to Leu662 the chain is Extracellular. N-linked (GlcNAc...) asparagine glycans are attached at residues Asn198, Asn267, Asn283, Asn330, Asn353, Asn394, Asn452, Asn519, Asn523, and Asn586.

The protein belongs to the gamma-glutamyltransferase family. Interacts with TLCD3A. In terms of assembly, heterodimer composed of the light and heavy chains. The active site is located in the light chain. In terms of processing, cleaved by autocatalysis into a large and a small subunit and the autocatalytic cleavage is essential to the functional activation of the enzyme. Widely expressed, but at low level, except in the airway epithelial cells. Detected in brain, heart, kidney, liver, lung, spleen, testis and trachea.

Its subcellular location is the membrane. It carries out the reaction an N-terminal (5-L-glutamyl)-[peptide] + an alpha-amino acid = 5-L-glutamyl amino acid + an N-terminal L-alpha-aminoacyl-[peptide]. The catalysed reaction is glutathione + H2O = L-cysteinylglycine + L-glutamate. It catalyses the reaction an S-substituted glutathione + H2O = an S-substituted L-cysteinylglycine + L-glutamate. It participates in sulfur metabolism; glutathione metabolism. Functionally, hydrolyzes and transfers gamma-glutamyl moieties from glutathione and other gamma-glutamyl compounds to acceptors. The protein is Glutathione hydrolase 7 of Homo sapiens (Human).